A 299-amino-acid polypeptide reads, in one-letter code: Sulfate adenylyltransferase subunit 2 (299 aa).

It belongs to the PAPS reductase family. CysD subfamily. As to quaternary structure, sulfate-activating enzymes, NodP and NodQ, may be physically associated.

The enzyme catalyses sulfate + ATP + H(+) = adenosine 5'-phosphosulfate + diphosphate. In terms of biological role, proposed to provide activated sulfate for transfer to nod factor. This chain is Sulfate adenylyltransferase subunit 2 (nodP), found in Rhizobium tropici.